The following is a 403-amino-acid chain: Casein kinase I isoform delta-A (403 aa).

Residues 9-277 (YRLGRKIGSG…YLRQLFRNLF (269 aa)) enclose the Protein kinase domain. ATP-binding positions include 15 to 23 (IGSGSFGDI) and lysine 38. The active-site Proton acceptor is aspartate 128. The segment at 315–340 (QGRIPLPRVMLPTSSGRPRGTQEVAP) is autoinhibitory. Residues 322 to 403 (RVMLPTSSGR…PSGLQSAVPR (82 aa)) are disordered.

It belongs to the protein kinase superfamily. In terms of assembly, monomer. Interacts with per1 and per2. Component of the circadian core oscillator. Autophosphorylated on serine and threonine residues.

It is found in the cytoplasm. It localises to the nucleus. It catalyses the reaction L-seryl-[protein] + ATP = O-phospho-L-seryl-[protein] + ADP + H(+). The enzyme catalyses L-threonyl-[protein] + ATP = O-phospho-L-threonyl-[protein] + ADP + H(+). Its activity is regulated as follows. Exhibits substrate-dependent heparin activation. Functionally, casein kinases are operationally defined by their preferential utilization of acidic proteins such as caseins as substrates. Central component of the circadian clock. May act as a negative regulator of circadian rhythmicity by phosphorylating per1 and per2, which may lead to their degradation. Participates in wnt signaling. This is Casein kinase I isoform delta-A (csnk1da) from Danio rerio (Zebrafish).